A 342-amino-acid polypeptide reads, in one-letter code: MDLRGTRITVHDMTLRDGMHPKRHLMTLEQMKTIAQGLDQAGIPLIEVTHGDGLGGSSVNYGFPAHTDEEYLGAVIPLMKQAKVSALLLPGIGTVDHLKMAHELGVNTIRVATHCTEADVSEQHISYARKLGMDTVGFLMMAHMNSPEGLVQQAKLMESYGANCIYVTDSAGHLLPDTVKARISAVRDALKPETELGFHGHHNLAMGVANSIAAIEAGATRIDAAAAGLGAGAGNTPMEVLIAVCDLMGIETGVDVFKIQDVAEDLVVPIMDFPIRIDRDALTLGYAGVYGSFLLFAKRAEKKYGVPAREILVEMGRRGMVGGQEDMIEDTAITLAKASAAA.

The Pyruvate carboxyltransferase domain occupies 8–260; the sequence is ITVHDMTLRD…ETGVDVFKIQ (253 aa). 16–17 is a binding site for substrate; the sequence is RD. Residue aspartate 17 coordinates Mn(2+). The Proton acceptor role is filled by histidine 20. Substrate contacts are provided by serine 170 and histidine 199. 2 residues coordinate Mn(2+): histidine 199 and histidine 201. Tyrosine 290 contributes to the substrate binding site.

This sequence belongs to the 4-hydroxy-2-oxovalerate aldolase family.

It carries out the reaction (S)-4-hydroxy-2-oxopentanoate = acetaldehyde + pyruvate. The chain is 4-hydroxy-2-oxovalerate aldolase 2 (mhpE) from Azoarcus sp. (strain BH72).